The sequence spans 183 residues: UPF0397 protein EF_2154 (183 aa).

A run of 5 helical transmembrane segments spans residues isoleucine 10–proline 30, phenylalanine 44–glycine 64, glycine 74–alanine 94, isoleucine 115–leucine 135, and glutamine 147–methionine 167.

This sequence belongs to the UPF0397 family.

The protein localises to the cell membrane. The sequence is that of UPF0397 protein EF_2154 from Enterococcus faecalis (strain ATCC 700802 / V583).